A 301-amino-acid chain; its full sequence is 2-(hydroxymethyl)glutarate dehydrogenase (301 aa).

NAD(+) is bound by residues 8-22 (GFIG…MAIN) and S99. K174 is a catalytic residue. An NAD(+)-binding site is contributed by K243.

The protein belongs to the HIBADH-related family. In terms of assembly, homotetramer.

It carries out the reaction (S)-2-hydroxymethylglutarate + NAD(+) = 2-formylglutarate + NADH + H(+). It participates in cofactor degradation; nicotinate degradation; propanoate and pyruvate from 6-hydroxynicotinate: step 3/8. In terms of biological role, catalyzes the conversion of 2-formylglutarate to (S)-2-hydroxymethylglutarate. Has very low activity with (S)-3-hydroxyisobutyrate. The sequence is that of 2-(hydroxymethyl)glutarate dehydrogenase from Eubacterium barkeri (Clostridium barkeri).